A 178-amino-acid chain; its full sequence is Large ribosomal subunit protein uL6 (178 aa).

Belongs to the universal ribosomal protein uL6 family. Part of the 50S ribosomal subunit.

This protein binds to the 23S rRNA, and is important in its secondary structure. It is located near the subunit interface in the base of the L7/L12 stalk, and near the tRNA binding site of the peptidyltransferase center. This Tropheryma whipplei (strain TW08/27) (Whipple's bacillus) protein is Large ribosomal subunit protein uL6.